The sequence spans 361 residues: tRNA/tmRNA (uracil-C(5))-methyltransferase (361 aa).

Positions 185, 213, 218, 234, and 294 each coordinate S-adenosyl-L-methionine. The active-site Nucleophile is the Cys-319. Glu-353 functions as the Proton acceptor in the catalytic mechanism.

The protein belongs to the class I-like SAM-binding methyltransferase superfamily. RNA M5U methyltransferase family. TrmA subfamily.

The catalysed reaction is uridine(54) in tRNA + S-adenosyl-L-methionine = 5-methyluridine(54) in tRNA + S-adenosyl-L-homocysteine + H(+). It carries out the reaction uridine(341) in tmRNA + S-adenosyl-L-methionine = 5-methyluridine(341) in tmRNA + S-adenosyl-L-homocysteine + H(+). In terms of biological role, dual-specificity methyltransferase that catalyzes the formation of 5-methyluridine at position 54 (m5U54) in all tRNAs, and that of position 341 (m5U341) in tmRNA (transfer-mRNA). In Pseudomonas entomophila (strain L48), this protein is tRNA/tmRNA (uracil-C(5))-methyltransferase.